Here is a 303-residue protein sequence, read N- to C-terminus: Protoheme IX farnesyltransferase (303 aa).

Helical transmembrane passes span 26-46 (VVALMLLTSLIGMLLAVPGMV), 48-68 (IDILILGNLGIALCAGSAAAV), 98-118 (AILFAAILGLAGMAILMVWVN), 120-140 (LTAWLTLASLVGYAFIYTFWL), 148-168 (IVIGGLAGAAPPLLGWVAVTG), 174-194 (ALLLVLIIFAWTPPHFWALAV), 221-241 (ILLYTFILIAVTLLPYATHML), 244-264 (LYLLGAVVLGIGFLYYAVAMM), and 278-298 (YSIVYLMALFVVMLLDHYLLP).

This sequence belongs to the UbiA prenyltransferase family. Protoheme IX farnesyltransferase subfamily.

It localises to the cell inner membrane. It carries out the reaction heme b + (2E,6E)-farnesyl diphosphate + H2O = Fe(II)-heme o + diphosphate. Its pathway is porphyrin-containing compound metabolism; heme O biosynthesis; heme O from protoheme: step 1/1. Converts heme B (protoheme IX) to heme O by substitution of the vinyl group on carbon 2 of heme B porphyrin ring with a hydroxyethyl farnesyl side group. In Saccharophagus degradans (strain 2-40 / ATCC 43961 / DSM 17024), this protein is Protoheme IX farnesyltransferase.